We begin with the raw amino-acid sequence, 259 residues long: 3-deoxy-manno-octulosonate cytidylyltransferase 1 (259 aa).

It belongs to the KdsB family.

It is found in the cytoplasm. The enzyme catalyses 3-deoxy-alpha-D-manno-oct-2-ulosonate + CTP = CMP-3-deoxy-beta-D-manno-octulosonate + diphosphate. The protein operates within nucleotide-sugar biosynthesis; CMP-3-deoxy-D-manno-octulosonate biosynthesis; CMP-3-deoxy-D-manno-octulosonate from 3-deoxy-D-manno-octulosonate and CTP: step 1/1. Its pathway is bacterial outer membrane biogenesis; lipopolysaccharide biosynthesis. Functionally, activates KDO (a required 8-carbon sugar) for incorporation into bacterial lipopolysaccharide in Gram-negative bacteria. This chain is 3-deoxy-manno-octulosonate cytidylyltransferase 1, found in Hydrogenovibrio crunogenus (strain DSM 25203 / XCL-2) (Thiomicrospira crunogena).